The chain runs to 118 residues: MLMYKKIVGHKKNMLPATLNNIDDSQNVALNRKKSENKKLTLQEKIELSWQFLYDLTEIILNKFSKEDVVQVNKCGQILFENGVRYEHVVDLITPHQVRSHTQLVEQEQSKGKKALRM.

This is an uncharacterized protein from Rickettsia prowazekii (strain Madrid E).